A 116-amino-acid chain; its full sequence is Large ribosomal subunit protein bL17 (116 aa).

Belongs to the bacterial ribosomal protein bL17 family. As to quaternary structure, part of the 50S ribosomal subunit. Contacts protein L32.

The protein is Large ribosomal subunit protein bL17 of Helicobacter hepaticus (strain ATCC 51449 / 3B1).